Reading from the N-terminus, the 284-residue chain is Pseudopaline exporter CntI (284 aa).

10 helical membrane-spanning segments follow: residues 2–22, 34–54, 74–94, 96–116, 122–142, 147–167, 179–199, 209–229, 236–256, and 259–279; these read VLDL…TFSV, LPAA…IYLL, GVMG…IPLA, ASIL…LFLG, AVYW…KPFS, SVYA…SVAI, IVFY…WNDF, GLLL…TRAF, IVAV…WLFW, and VPDA…IALS. 2 consecutive EamA domains span residues 8 to 138 and 151 to 279; these read SGVL…LMIV and VVGL…IALS.

This sequence belongs to the EamA transporter family.

It localises to the cell inner membrane. In terms of biological role, transports the metallophore pseudopaline, which is involved in the acquisition of nickel and zinc, and thus enables bacterial growth inside the host, where metal access is limited. Is probably involved in the export of pseudopaline. Essential for iron acquisition during the interaction with airway mucus secretions (AMS). In Pseudomonas aeruginosa (strain ATCC 15692 / DSM 22644 / CIP 104116 / JCM 14847 / LMG 12228 / 1C / PRS 101 / PAO1), this protein is Pseudopaline exporter CntI.